A 218-amino-acid polypeptide reads, in one-letter code: Deoxyribose-phosphate aldolase (218 aa).

The Proton donor/acceptor role is filled by D89. Residue K152 is the Schiff-base intermediate with acetaldehyde of the active site. Catalysis depends on K182, which acts as the Proton donor/acceptor.

The protein belongs to the DeoC/FbaB aldolase family. DeoC type 1 subfamily.

The protein localises to the cytoplasm. The enzyme catalyses 2-deoxy-D-ribose 5-phosphate = D-glyceraldehyde 3-phosphate + acetaldehyde. It functions in the pathway carbohydrate degradation; 2-deoxy-D-ribose 1-phosphate degradation; D-glyceraldehyde 3-phosphate and acetaldehyde from 2-deoxy-alpha-D-ribose 1-phosphate: step 2/2. Its function is as follows. Catalyzes a reversible aldol reaction between acetaldehyde and D-glyceraldehyde 3-phosphate to generate 2-deoxy-D-ribose 5-phosphate. The protein is Deoxyribose-phosphate aldolase of Corynebacterium diphtheriae (strain ATCC 700971 / NCTC 13129 / Biotype gravis).